Here is a 501-residue protein sequence, read N- to C-terminus: Sensor histidine kinase PdtaS (501 aa).

The tract at residues 4 to 150 (LGDLLAEHTV…HLETAYRLCA (147 aa)) is GAF. The interval 179–291 (DGFIRLDVDG…TEVKRRDRAL (113 aa)) is PAS-like. Residues 300–495 (EIHHRVKNNL…DVVLRVPVGR (196 aa)) form the Histidine kinase domain. Residue His303 is modified to Phosphohistidine; by autocatalysis.

Post-translationally, autophosphorylated.

It is found in the cytoplasm. It catalyses the reaction ATP + protein L-histidine = ADP + protein N-phospho-L-histidine.. Functionally, member of the two-component regulatory system PdtaR/PdtaS. This two-component system plays an essential role in mycobacterial adaptation to poor nutrient conditions. Nutrient deprivation results in increasing intracellular concentrations of cyclic diguanosine monophosphate (c-di-GMP), which binds to the PdtaS sensor and promotes its autophosphorylation, leading to the activation of the signaling cascade. The phosphate group is then transferred to PdtaR. In terms of biological role, in addition, the PdtaR/PdtaS two-component system controls copper and nitric oxide (NO) resistance downstream of the intramembrane protease Rip1. This coupled Rip1/PdtaS/PdtaR circuit controls NO resistance and acute lung infection in mice by relieving PdtaR/PdtaS-mediated repression of isonitrile chalkophore biosynthesis. Two signals are required to fully inactivate the PdtaR/PdtaS system and mediate NO resistance: a cytoplasmic inhibitory signal through the PdtaS kinase mediated by direct sensing of NO and the production of PPE1-5', an NO-induced small RNA, to sequester PdtaR. This chain is Sensor histidine kinase PdtaS (pdtaS), found in Mycobacterium tuberculosis (strain CDC 1551 / Oshkosh).